Here is a 629-residue protein sequence, read N- to C-terminus: Probable potassium transport system protein Kup 3 (629 aa).

Transmembrane regions (helical) follow at residues 20-40, 61-81, 106-126, 143-163, 171-191, 209-229, 253-273, 291-311, 343-363, 372-392, 400-420, and 425-445; these read LSLS…LYTF, VSLI…HFAL, PFII…GTIT, PSLK…LFAI, IGKA…ILGA, GLSF…GVFL, WFGL…ALVL, FLLP…QAII, IYIG…TIGF, AYGI…FIAL, IITS…FFAA, and FING…MMYI.

This sequence belongs to the HAK/KUP transporter (TC 2.A.72) family.

It is found in the cell inner membrane. The catalysed reaction is K(+)(in) + H(+)(in) = K(+)(out) + H(+)(out). In terms of biological role, transport of potassium into the cell. Likely operates as a K(+):H(+) symporter. This is Probable potassium transport system protein Kup 3 from Legionella pneumophila subsp. pneumophila (strain Philadelphia 1 / ATCC 33152 / DSM 7513).